Consider the following 215-residue polypeptide: Redox-sensing transcriptional repressor Rex 2 (215 aa).

The segment at residues 15–54 (VYLRYLKMLGDSGVKRIKSREFSEMIQIPSATIRRDFSHV) is a DNA-binding region (H-T-H motif). Position 89–94 (89–94 (GCGNLG)) interacts with NAD(+).

It belongs to the transcriptional regulatory Rex family. As to quaternary structure, homodimer.

It is found in the cytoplasm. Modulates transcription in response to changes in cellular NADH/NAD(+) redox state. In Enterococcus faecalis (strain ATCC 700802 / V583), this protein is Redox-sensing transcriptional repressor Rex 2.